A 423-amino-acid chain; its full sequence is Adenylosuccinate synthetase (423 aa).

GTP contacts are provided by residues 12 to 18 and 40 to 42; these read GDEGKGK and GHT. The Proton acceptor role is filled by aspartate 13. 2 residues coordinate Mg(2+): aspartate 13 and glycine 40. IMP is bound by residues 13 to 16, 38 to 41, threonine 128, arginine 142, glutamine 223, threonine 238, and arginine 302; these read DEGK and NAGH. The active-site Proton donor is the histidine 41. 298–304 is a substrate binding site; sequence TTTGRPR. GTP is bound by residues arginine 304, 330–332, and 412–414; these read RLD and CIG.

This sequence belongs to the adenylosuccinate synthetase family. As to quaternary structure, homodimer. Mg(2+) serves as cofactor.

The protein resides in the cytoplasm. It carries out the reaction IMP + L-aspartate + GTP = N(6)-(1,2-dicarboxyethyl)-AMP + GDP + phosphate + 2 H(+). It participates in purine metabolism; AMP biosynthesis via de novo pathway; AMP from IMP: step 1/2. Its function is as follows. Plays an important role in the de novo pathway of purine nucleotide biosynthesis. Catalyzes the first committed step in the biosynthesis of AMP from IMP. In Dehalococcoides mccartyi (strain ATCC BAA-2266 / KCTC 15142 / 195) (Dehalococcoides ethenogenes (strain 195)), this protein is Adenylosuccinate synthetase.